A 147-amino-acid chain; its full sequence is Augurin (147 aa).

An N-terminal signal peptide occupies residues 1 to 31 (MANSSARPAFLVMTALALLLLLCVGPGGISG). 2 propeptides span residues 32–68 (NKLKLLLRKREAPAPTMTPVAVQESRAKEFLSSLRRP) and 132–147 (SAHSFRHGASVNYDDY).

This sequence belongs to the augurin family.

Its subcellular location is the secreted. The protein localises to the cytoplasm. It is found in the apical cell membrane. Functionally, probable hormone that may attenuate cell proliferation and induce senescence of oligodendrocyte and neural precursor cells in the central nervous system. ECRG4-induced senescence is characterized by G1 arrest, RB1 dephosphorylation and accelerated CCND1 and CCND3 proteasomal degradation. The protein is Augurin of Bos taurus (Bovine).